Reading from the N-terminus, the 316-residue chain is Glutathione synthetase (316 aa).

The region spanning 124–310 is the ATP-grasp domain; the sequence is EKLFTAWFPE…ITGKLMDAIE (187 aa). 150–207 contacts ATP; sequence FREEHGDVILKPLDGMGGASIFRVKENDPNVSVIIETLTNHGQNYAMAQTFVPDISNG. Residues E281 and N283 each coordinate Mg(2+).

It belongs to the prokaryotic GSH synthase family. The cofactor is Mg(2+). Mn(2+) is required as a cofactor.

The catalysed reaction is gamma-L-glutamyl-L-cysteine + glycine + ATP = glutathione + ADP + phosphate + H(+). The protein operates within sulfur metabolism; glutathione biosynthesis; glutathione from L-cysteine and L-glutamate: step 2/2. The polypeptide is Glutathione synthetase (Vibrio parahaemolyticus serotype O3:K6 (strain RIMD 2210633)).